The primary structure comprises 138 residues: Small ribosomal subunit protein uS8 (138 aa).

The protein belongs to the universal ribosomal protein uS8 family. Part of the 30S ribosomal subunit. Contacts proteins S5 and S12.

In terms of biological role, one of the primary rRNA binding proteins, it binds directly to 16S rRNA central domain where it helps coordinate assembly of the platform of the 30S subunit. This is Small ribosomal subunit protein uS8 (rpsH) from Thermus thermophilus (strain ATCC BAA-163 / DSM 7039 / HB27).